The chain runs to 229 residues: Potassium/proton antiporter CemA (229 aa).

A run of 3 helical transmembrane segments spans residues 7–27, 106–126, and 189–209; these read FLPL…SLSF, MILH…YSIL, and IISG…KYWI.

The protein belongs to the CemA family.

The protein resides in the plastid. The protein localises to the chloroplast inner membrane. The enzyme catalyses K(+)(in) + H(+)(out) = K(+)(out) + H(+)(in). Functionally, contributes to K(+)/H(+) antiport activity by supporting proton efflux to control proton extrusion and homeostasis in chloroplasts in a light-dependent manner to modulate photosynthesis. Prevents excessive induction of non-photochemical quenching (NPQ) under continuous-light conditions. Indirectly promotes efficient inorganic carbon uptake into chloroplasts. The polypeptide is Potassium/proton antiporter CemA (Eucalyptus globulus subsp. globulus (Tasmanian blue gum)).